Here is a 189-residue protein sequence, read N- to C-terminus: Small ribosomal subunit protein uS7 (189 aa).

Belongs to the universal ribosomal protein uS7 family. Part of the 30S ribosomal subunit.

Functionally, one of the primary rRNA binding proteins, it binds directly to 16S rRNA where it nucleates assembly of the head domain of the 30S subunit. Is located at the subunit interface close to the decoding center. This Methanosarcina mazei (strain ATCC BAA-159 / DSM 3647 / Goe1 / Go1 / JCM 11833 / OCM 88) (Methanosarcina frisia) protein is Small ribosomal subunit protein uS7.